The sequence spans 967 residues: Probable disease resistance protein At1g61190 (967 aa).

A coiled-coil region spans residues 20–68 (RCLCGKGYIRNLEKNLRALQREMEDLRATQHEVQNKVAREESRHQQRLE). The interval 132-153 (GNFDEVSQPPPRSEVEERPTQP) is disordered. The NB-ARC domain maps to 138 to 441 (SQPPPRSEVE…CEGFIGEDQV (304 aa)). 180–187 (GMGGVGKT) is a binding site for ATP. LRR repeat units lie at residues 516 to 537 (AVRR…SKCS), 538 to 559 (ELTT…FIRY), 562 to 585 (KLVV…SGLV), 586 to 608 (SLQY…KELK), and 609 to 631 (KLIF…SRLL).

It belongs to the disease resistance NB-LRR family.

Probable disease resistance protein. This is Probable disease resistance protein At1g61190 from Arabidopsis thaliana (Mouse-ear cress).